A 290-amino-acid chain; its full sequence is Fructose-1,6-bisphosphatase class 1 (290 aa).

Glu78, Asp96, Leu98, and Asp99 together coordinate Mg(2+). Substrate contacts are provided by residues Asp99–Ser102, Tyr201, and Lys226. Glu232 lines the Mg(2+) pocket.

This sequence belongs to the FBPase class 1 family. Homotetramer. Requires Mg(2+) as cofactor.

It localises to the cytoplasm. It carries out the reaction beta-D-fructose 1,6-bisphosphate + H2O = beta-D-fructose 6-phosphate + phosphate. It functions in the pathway carbohydrate biosynthesis; gluconeogenesis. The sequence is that of Fructose-1,6-bisphosphatase class 1 from Helicobacter pylori (strain G27).